The chain runs to 377 residues: Succinyl-diaminopimelate desuccinylase (377 aa).

H67 contacts Zn(2+). D69 is a catalytic residue. D100 contacts Zn(2+). Catalysis depends on E134, which acts as the Proton acceptor. Residues E135, E163, and H349 each coordinate Zn(2+).

Belongs to the peptidase M20A family. DapE subfamily. In terms of assembly, homodimer. Zn(2+) is required as a cofactor. Requires Co(2+) as cofactor.

It catalyses the reaction N-succinyl-(2S,6S)-2,6-diaminopimelate + H2O = (2S,6S)-2,6-diaminopimelate + succinate. The protein operates within amino-acid biosynthesis; L-lysine biosynthesis via DAP pathway; LL-2,6-diaminopimelate from (S)-tetrahydrodipicolinate (succinylase route): step 3/3. In terms of biological role, catalyzes the hydrolysis of N-succinyl-L,L-diaminopimelic acid (SDAP), forming succinate and LL-2,6-diaminopimelate (DAP), an intermediate involved in the bacterial biosynthesis of lysine and meso-diaminopimelic acid, an essential component of bacterial cell walls. The chain is Succinyl-diaminopimelate desuccinylase from Mannheimia succiniciproducens (strain KCTC 0769BP / MBEL55E).